We begin with the raw amino-acid sequence, 235 residues long: Uridylate kinase (235 aa).

Residue 9 to 12 coordinates ATP; it reads KLSG. Gly-51 provides a ligand contact to UMP. The ATP site is built by Gly-52 and Arg-56. UMP contacts are provided by residues Asp-71 and 133–140; that span reads SGNPFFTT. Thr-160, Tyr-166, and Asp-169 together coordinate ATP.

It belongs to the UMP kinase family. As to quaternary structure, homohexamer.

It localises to the cytoplasm. The catalysed reaction is UMP + ATP = UDP + ADP. It functions in the pathway pyrimidine metabolism; CTP biosynthesis via de novo pathway; UDP from UMP (UMPK route): step 1/1. With respect to regulation, inhibited by UTP. Its function is as follows. Catalyzes the reversible phosphorylation of UMP to UDP. The protein is Uridylate kinase of Gloeobacter violaceus (strain ATCC 29082 / PCC 7421).